The sequence spans 357 residues: Protein-glutamate methylesterase/protein-glutamine glutaminase 5 (357 aa).

In terms of domain architecture, Response regulatory spans 10 to 127; the sequence is RVLVVDDSSF…IDAQKAFKEE (118 aa). Asp61 carries the post-translational modification 4-aspartylphosphate. A CheB-type methylesterase domain is found at 161-357; sequence PRPAGQRYQY…IGTEITKIAG (197 aa). Catalysis depends on residues Ser176, His203, and Asp301.

Belongs to the CheB family. Post-translationally, phosphorylated by CheA. Phosphorylation of the N-terminal regulatory domain activates the methylesterase activity.

It is found in the cytoplasm. It catalyses the reaction [protein]-L-glutamate 5-O-methyl ester + H2O = L-glutamyl-[protein] + methanol + H(+). The catalysed reaction is L-glutaminyl-[protein] + H2O = L-glutamyl-[protein] + NH4(+). Its function is as follows. Involved in chemotaxis. Part of a chemotaxis signal transduction system that modulates chemotaxis in response to various stimuli. Catalyzes the demethylation of specific methylglutamate residues introduced into the chemoreceptors (methyl-accepting chemotaxis proteins or MCP) by CheR. Also mediates the irreversible deamidation of specific glutamine residues to glutamic acid. The polypeptide is Protein-glutamate methylesterase/protein-glutamine glutaminase 5 (Geobacter metallireducens (strain ATCC 53774 / DSM 7210 / GS-15)).